A 134-amino-acid chain; its full sequence is STAG3-like protein 3 (134 aa).

An SCD domain is found at 10 to 95; the sequence is PKVTCRDVLP…GCFKDWMVSM (86 aa).

It belongs to the SCC3 family.

It is found in the nucleus. This chain is STAG3-like protein 3 (STAG3L3), found in Homo sapiens (Human).